A 232-amino-acid polypeptide reads, in one-letter code: Ribonuclease 3 (232 aa).

An RNase III domain is found at 6-137; that stretch reads QEMLKRDFNI…FIGALYLDQG (132 aa). A Mg(2+)-binding site is contributed by Glu50. Asp54 is an active-site residue. Mg(2+) is bound by residues Asp123 and Glu126. Glu126 is an active-site residue. The DRBM domain maps to 163 to 232; sequence DNKTELQEVL…AYQALKKLRK (70 aa).

Belongs to the ribonuclease III family. As to quaternary structure, homodimer. The cofactor is Mg(2+).

It localises to the cytoplasm. It catalyses the reaction Endonucleolytic cleavage to 5'-phosphomonoester.. In terms of biological role, digests double-stranded RNA. Involved in the processing of primary rRNA transcript to yield the immediate precursors to the large and small rRNAs (23S and 16S). Processes some mRNAs, and tRNAs when they are encoded in the rRNA operon. Processes pre-crRNA and tracrRNA of type II CRISPR loci if present in the organism. The sequence is that of Ribonuclease 3 from Ligilactobacillus salivarius (strain UCC118) (Lactobacillus salivarius).